Consider the following 37-residue polypeptide: Non-specific lipid-transfer protein P4 (37 aa).

The protein belongs to the plant LTP family.

It is found in the secreted. Plant non-specific lipid-transfer proteins transfer phospholipids as well as galactolipids across membranes. May play a role in wax or cutin deposition in the cell walls of expanding epidermal cells and certain secretory tissues. The polypeptide is Non-specific lipid-transfer protein P4 (Vitis sp. (Grape)).